Here is a 124-residue protein sequence, read N- to C-terminus: UPF0738 protein GWCH70_0774 (124 aa).

This sequence belongs to the UPF0738 family.

The polypeptide is UPF0738 protein GWCH70_0774 (Geobacillus sp. (strain WCH70)).